The chain runs to 109 residues: Nucleoid-associated protein ETA_24730 (109 aa).

Belongs to the YbaB/EbfC family. Homodimer.

It localises to the cytoplasm. It is found in the nucleoid. Its function is as follows. Binds to DNA and alters its conformation. May be involved in regulation of gene expression, nucleoid organization and DNA protection. This is Nucleoid-associated protein ETA_24730 from Erwinia tasmaniensis (strain DSM 17950 / CFBP 7177 / CIP 109463 / NCPPB 4357 / Et1/99).